We begin with the raw amino-acid sequence, 574 residues long: MAFNFNWSPLMADAGFYTRAQDLLTTALNKSPKPPIIVDDIVVTELNLGSIPPELEILEIGDLAEDRFRGIFKMSYSGDAFLTLKTRVQANPLNTYLITRPAYASPKPLAAASGLTIPLQITLSNFRLSGFVILVFSKQKGITVVFRNDPLESLKVSSTFDSIPSVRDYLQREIEGQLRILFMDELPAIIHRLSLRLWVPEYRGLDAEARESPAASASGPGEDPLLSPPKDPVDASGNLLSSADIASLSLDSGVEMHSLFSQKNLLRLAALTNSQRTLSLFTPSIREVVFRAWTGCADQGEGAASGVVSPGSPVLSRTHSHISSPLSSLQDASSVLSLQNRSTTPGSSFSGYGLSLGAGRHSKTRPTRKRKKRVVDLRKHNKPADAESVSADSTFTESTTPPTVFSSSVIQEEANDDPVTPPMSPETTMRIPNRQHRFSTSEDKGKLRASVAQQLTYTQPSHSTLHAQRANHCPMIPLSADGAKTSSQQQPISHGSYLAPREKSHEASSAYESNANRSITDAVPNSSILEQAWMMKMANEIARRIQEGKFAANNNYPGAWEQARARTPPPAYGQ.

In terms of domain architecture, SMP-LTD spans 1–195; the sequence is MAFNFNWSPL…LPAIIHRLSL (195 aa). Disordered regions lie at residues 210 to 233, 301 to 403, and 479 to 515; these read RESP…KDPV, EGAA…TPPT, and SADG…ESNA. Low complexity-rich tracts occupy residues 212-224, 302-314, and 323-334; these read SPAA…GEDP, GAAS…GSPV, and SSPLSSLQDASS. Over residues 335–345 the composition is skewed to polar residues; it reads VLSLQNRSTTP. Over residues 346–359 the composition is skewed to low complexity; sequence GSSFSGYGLSLGAG. Residues 360–373 are compositionally biased toward basic residues; sequence RHSKTRPTRKRKKR. Residues 374–385 are compositionally biased toward basic and acidic residues; sequence VVDLRKHNKPAD. Residues 393–403 show a composition bias toward low complexity; sequence STFTESTTPPT. Over residues 484–493 the composition is skewed to polar residues; it reads KTSSQQQPIS.

Belongs to the MDM34 family. As to quaternary structure, component of the ER-mitochondria encounter structure (ERMES) or MDM complex, composed of MMM1, MDM10, MDM12 and MDM34.

The protein localises to the mitochondrion outer membrane. Functionally, component of the ERMES/MDM complex, which serves as a molecular tether to connect the endoplasmic reticulum (ER) and mitochondria. Components of this complex are involved in the control of mitochondrial shape and protein biogenesis, and function in nonvesicular lipid trafficking between the ER and mitochondria. MDM34 is required for the interaction of the ER-resident membrane protein MMM1 and the outer mitochondrial membrane-resident beta-barrel protein MDM10. This chain is Mitochondrial distribution and morphology protein 34, found in Coccidioides immitis (strain RS) (Valley fever fungus).